A 183-amino-acid chain; its full sequence is Probable adenylyl-sulfate kinase (183 aa).

17–24 (GLPGSGKT) contacts ATP. Ser91 (phosphoserine intermediate) is an active-site residue.

Belongs to the APS kinase family.

The catalysed reaction is adenosine 5'-phosphosulfate + ATP = 3'-phosphoadenylyl sulfate + ADP + H(+). It participates in sulfur metabolism; hydrogen sulfide biosynthesis; sulfite from sulfate: step 2/3. In terms of biological role, catalyzes the synthesis of activated sulfate. In Aeropyrum pernix (strain ATCC 700893 / DSM 11879 / JCM 9820 / NBRC 100138 / K1), this protein is Probable adenylyl-sulfate kinase (cysC).